Here is an 84-residue protein sequence, read N- to C-terminus: Defensin-like protein 140 (84 aa).

An N-terminal signal peptide occupies residues 1 to 28 (MSKSLQLIVTVLCIFTILVLGEICLAKG). Cystine bridges form between cysteine 37–cysteine 81, cysteine 46–cysteine 65, cysteine 51–cysteine 75, and cysteine 55–cysteine 77.

This sequence belongs to the DEFL family.

The protein localises to the secreted. The sequence is that of Defensin-like protein 140 (LCR15) from Arabidopsis thaliana (Mouse-ear cress).